Here is a 115-residue protein sequence, read N- to C-terminus: Alpha-endosulfine (115 aa).

Over residues 1 to 10 the composition is skewed to polar residues; it reads MSSENLSDTQ. The tract at residues 1 to 27 is disordered; it reads MSSENLSDTQMEYEDEKQDSQEKNANL. S65 carries the post-translational modification Phosphoserine; by GWL. Residues 77 to 115 are disordered; the sequence is NKQLPVAGPDKNLVTGDHIPTPQDLPQRRSSLVTSKLAG. Polar residues predominate over residues 104-115; sequence RRSSLVTSKLAG.

This sequence belongs to the endosulfine family. In terms of processing, phosphorylation at Ser-65 by gwl during mitosis is essential for interaction with ppp2r2d (PR55-delta) and subsequent inactivation of PP2A.

The protein resides in the cytoplasm. In terms of biological role, protein phosphatase inhibitor that specifically inhibits protein phosphatase 2A (PP2A) during mitosis. When phosphorylated at Ser-67 during mitosis, specifically interacts with ppp2r2d (PR55-delta) and inhibits its activity, leading to inactivation of PP2A, an essential condition to keep cyclin-B1-CDK1 activity high during M phase. The chain is Alpha-endosulfine (ensa) from Salmo salar (Atlantic salmon).